The chain runs to 333 residues: Zinc-type alcohol dehydrogenase-like protein SACOL2177 (333 aa).

It belongs to the zinc-containing alcohol dehydrogenase family. Quinone oxidoreductase subfamily.

In Staphylococcus aureus (strain COL), this protein is Zinc-type alcohol dehydrogenase-like protein SACOL2177.